The chain runs to 196 residues: Beta-crystallin A2 (196 aa).

The N-terminal arm stretch occupies residues 1-11 (MTSEAMDTLGQ). 2 Beta/gamma crystallin 'Greek key' domains span residues 12–51 (YKIT…KVES) and 52–98 (GPWV…RPVK). The interval 99–104 (CANHND) is connecting peptide. 2 Beta/gamma crystallin 'Greek key' domains span residues 105–146 (SKAI…KVNA) and 147–195 (GAWV…RRIQ).

This sequence belongs to the beta/gamma-crystallin family. As to quaternary structure, homo/heterodimer, or complexes of higher-order. The structure of beta-crystallin oligomers seems to be stabilized through interactions between the N-terminal arms.

Its function is as follows. Crystallins are the dominant structural components of the vertebrate eye lens. In Gallus gallus (Chicken), this protein is Beta-crystallin A2 (CRYBA2).